The chain runs to 698 residues: Elongation factor G (698 aa).

Positions 10–285 constitute a tr-type G domain; the sequence is AGTRNIGIMA…AVVDFLPNPL (276 aa). GTP contacts are provided by residues 19–26, 83–87, and 137–140; these read AHIDAGKT, DTPGH, and NKMD.

The protein belongs to the TRAFAC class translation factor GTPase superfamily. Classic translation factor GTPase family. EF-G/EF-2 subfamily.

Its subcellular location is the cytoplasm. Functionally, catalyzes the GTP-dependent ribosomal translocation step during translation elongation. During this step, the ribosome changes from the pre-translocational (PRE) to the post-translocational (POST) state as the newly formed A-site-bound peptidyl-tRNA and P-site-bound deacylated tRNA move to the P and E sites, respectively. Catalyzes the coordinated movement of the two tRNA molecules, the mRNA and conformational changes in the ribosome. This chain is Elongation factor G, found in Frankia casuarinae (strain DSM 45818 / CECT 9043 / HFP020203 / CcI3).